Consider the following 265-residue polypeptide: MPKNILIFDSGIGGLSVFKDIRYQIPLAKYIYAFDNAGFPYGELTEDILIERTSYIIQKLCHRHKIDIVVIACNTASTVVLPTLRTLLSIPVVGVVPAIKPAALVSQKIGLLATPATIKRSYTFDLIKSFASISDVKLLGSTRLVEMAEEKMVGIPVNLIELDEILKSWKGQVDCIVLGCTHFPFLRKEIKEILGRNVLLIDSGEAIARRVKQLLGSVDANKGDHLFGEVYCSASTKNEEALNKTFKELDFNPLQTLGYPKSLDR.

Residues 9–10 (DS) and 41–42 (YG) each bind substrate. Catalysis depends on cysteine 73, which acts as the Proton donor/acceptor. 74–75 (NT) lines the substrate pocket. The active-site Proton donor/acceptor is cysteine 180. 181-182 (TH) is a binding site for substrate.

This sequence belongs to the aspartate/glutamate racemases family.

It catalyses the reaction L-glutamate = D-glutamate. The protein operates within cell wall biogenesis; peptidoglycan biosynthesis. Its function is as follows. Provides the (R)-glutamate required for cell wall biosynthesis. This is Glutamate racemase from Aliivibrio salmonicida (strain LFI1238) (Vibrio salmonicida (strain LFI1238)).